Here is a 109-residue protein sequence, read N- to C-terminus: Peptide chaperone MftB (109 aa).

It belongs to the peptide chaperone MftB family.

Peptide chaperone involved in the biosynthesis of the enzyme cofactor mycofactocin (MFT). Binds MftA and MftC with high affinity, and is essential for MftC activity on MftA, likely via the formation of a ternary complex. The protein is Peptide chaperone MftB of Mycobacterium tuberculosis (strain ATCC 25618 / H37Rv).